The chain runs to 577 residues: Arginine--tRNA ligase (577 aa).

Positions 122 to 132 (PNVAKEMHVGH) match the 'HIGH' region motif.

It belongs to the class-I aminoacyl-tRNA synthetase family. As to quaternary structure, monomer.

It is found in the cytoplasm. The catalysed reaction is tRNA(Arg) + L-arginine + ATP = L-arginyl-tRNA(Arg) + AMP + diphosphate. This chain is Arginine--tRNA ligase, found in Klebsiella pneumoniae (strain 342).